A 54-amino-acid chain; its full sequence is uncharacterized protein (54 aa).

This is an uncharacterized protein from Haemophilus influenzae (strain ATCC 51907 / DSM 11121 / KW20 / Rd).